The primary structure comprises 62 residues: Synergistic-type venom protein S2C4 (62 aa).

Cystine bridges form between cysteine 3–cysteine 24, cysteine 17–cysteine 42, and cysteine 46–cysteine 57.

Belongs to the three-finger toxin family. Short-chain subfamily. Aminergic toxin sub-subfamily. Homodimer; disulfide-linked. In terms of tissue distribution, expressed by the venom gland.

Its subcellular location is the secreted. This protein shows a synergetic toxic effect in that it enhances the toxicity of other toxins. The protein is Synergistic-type venom protein S2C4 of Dendroaspis jamesoni kaimosae (Eastern Jameson's mamba).